A 307-amino-acid polypeptide reads, in one-letter code: Geranylgeranyl diphosphate synthase (307 aa).

The isopentenyl diphosphate site is built by K52, R55, and H86. Residues D93 and D99 each coordinate Mg(2+). (2E,6E)-farnesyl diphosphate is bound at residue R104. R105 lines the isopentenyl diphosphate pocket. Positions 188, 189, and 226 each coordinate (2E,6E)-farnesyl diphosphate.

Belongs to the FPP/GGPP synthase family. Requires Mg(2+) as cofactor.

It catalyses the reaction isopentenyl diphosphate + (2E,6E)-farnesyl diphosphate = (2E,6E,10E)-geranylgeranyl diphosphate + diphosphate. Its pathway is isoprenoid biosynthesis; geranylgeranyl diphosphate biosynthesis; geranylgeranyl diphosphate from farnesyl diphosphate and isopentenyl diphosphate: step 1/1. Functionally, catalyzes the condensation of farnesyl diphosphate (FPP) and isopentenyl diphosphate (IPP) to yield geranylgeranyl diphosphate (GGPP) needed for biosynthesis of carotenoids and diterpenes. This Pseudescherichia vulneris (Escherichia vulneris) protein is Geranylgeranyl diphosphate synthase (crtE).